The chain runs to 1782 residues: A-kinase anchor protein 12 (1782 aa).

8 disordered regions span residues 1–53 (MGAG…DPAT), 71–169 (QDEL…QAND), 189–400 (KTEK…APLA), 421–886 (VSTV…ELSE), 938–1089 (EREV…LKKE), 1105–1134 (PFTQ…ESSE), 1157–1274 (AIPP…ADEK), and 1305–1355 (KGEG…HVNE). Glycine 2 carries the N-myristoyl glycine lipid modification. Phosphoserine is present on residues serine 11, serine 19, serine 28, serine 75, and serine 96. The segment covering 16–53 (PEGSSTPAEPEPSGGGPSAEAAPDTTADPAIAASDPAT) has biased composition (low complexity). Positions 108-125 (GQRDSEDVSKRDSDKEMA) are enriched in basic and acidic residues. A compositionally biased stretch (low complexity) spans 145–154 (IIEQIPSSES). Serine 154 is modified (phosphoserine). The span at 157–168 (EELTQPTESQAN) shows a compositional bias: polar residues. Serine 219, serine 248, serine 258, serine 280, serine 283, serine 286, serine 347, and serine 371 each carry phosphoserine. A compositionally biased stretch (basic and acidic residues) spans 226–249 (ASKESEPKQSTEKPEETLKREQSH). Positions 266–557 (KEEGEEKQEK…TQVPADSPDS (292 aa)) are involved in PKC-binding. Composition is skewed to basic and acidic residues over residues 315 to 347 (KPKE…EVAS) and 363 to 379 (ESAH…KVEL). Residue tyrosine 374 is modified to Phosphotyrosine. 2 positions are modified to phosphoserine: serine 381 and serine 392. Positions 423-435 (TVEERTEEQKTEV) are enriched in basic and acidic residues. A compositionally biased stretch (acidic residues) spans 446–456 (ELVEMDAEPQE). Over residues 458–468 (EPAKELVKLKE) the composition is skewed to basic and acidic residues. Phosphoserine occurs at positions 483 and 505. Over residues 528–537 (LSGKKQKGKR) the composition is skewed to basic residues. Phosphoserine is present on residues serine 554, serine 557, serine 598, serine 612, serine 627, and serine 629. The short motif at 607–627 (VTPWASFKKMVTPKKRVRRPS) is the AKAP CaM-binding 1 element. The segment covering 625–639 (RPSESDKEDELDKVK) has biased composition (basic and acidic residues). A compositionally biased stretch (low complexity) spans 640 to 652 (SATLSSTESTASE). Threonine 642 bears the Phosphothreonine mark. Phosphoserine occurs at positions 644, 645, 648, and 651. The span at 655–674 (EEMKGSVEEPKPEEPKRKVD) shows a compositional bias: basic and acidic residues. Serine 696, serine 697, and serine 698 each carry phosphoserine. The span at 708-724 (GGDHQKADEAGKDKETG) shows a compositional bias: basic and acidic residues. Over residues 739-749 (QGSSSPEQAGS) the composition is skewed to polar residues. Serine 749, serine 761, and serine 787 each carry phosphoserine. The short motif at 756–776 (VSTWESFKRLVTPRKKSKSKL) is the AKAP CaM-binding 2 element. Positions 792-803 (STPDTEPGKEES) are enriched in basic and acidic residues. An AKAP CaM-binding 3 motif is present at residues 801–821 (EESWVSIKKFIPGRRKKRPDG). Serine 806 bears the Phosphoserine mark. Residues 986-997 (GAEEGTEASAAE) are compositionally biased toward low complexity. A Glycyl lysine isopeptide (Lys-Gly) (interchain with G-Cter in SUMO1) cross-link involves residue lysine 1051. Residues 1072–1089 (AEAERPEEQAEASGLKKE) show a composition bias toward basic and acidic residues. Over residues 1164-1174 (ETPTDSETDGS) the composition is skewed to polar residues. 2 stretches are compositionally biased toward basic and acidic residues: residues 1187–1198 (QKDEIVEIHEEN) and 1231–1251 (EETK…KEVS). The segment covering 1253-1267 (ETVSILSKTEGTQEA) has biased composition (polar residues). Phosphoserine occurs at positions 1328 and 1331. The segment covering 1333-1355 (VEREMVVQVEREKTEAEPTHVNE) has biased composition (basic and acidic residues). Phosphoserine is present on residues serine 1391 and serine 1395. Positions 1541-1554 (ELETKSSKLVQNII) are RII-binding. Residues 1584 to 1782 (KADSQDAGQE…ESAKSELTES (199 aa)) are disordered. Serine 1587 bears the Phosphoserine mark. Over residues 1603-1612 (ASAQDETPIT) the composition is skewed to polar residues. 2 stretches are compositionally biased toward basic and acidic residues: residues 1629-1639 (DISKDMSEASE) and 1675-1699 (VPED…KEDE). Serine 1727 is subject to Phosphoserine. Basic and acidic residues-rich tracts occupy residues 1734 to 1757 (KQKE…ESDK) and 1766 to 1782 (ELQK…LTES).

As to quaternary structure, binds to dimeric RII-alpha regulatory subunit of PKC. In terms of tissue distribution, expressed in endothelial cells, cultured fibroblasts and osteosarcoma, but not in platelets, leukocytes, monocytic cell lines or peripherical blood cells.

Its subcellular location is the cytoplasm. The protein localises to the cell cortex. The protein resides in the cytoskeleton. It localises to the membrane. Functionally, anchoring protein that mediates the subcellular compartmentation of protein kinase A (PKA) and protein kinase C (PKC). This is A-kinase anchor protein 12 (AKAP12) from Homo sapiens (Human).